A 64-amino-acid polypeptide reads, in one-letter code: DNA gyrase inhibitor YacG (64 aa).

Zn(2+) contacts are provided by Cys6, Cys9, Cys25, and Cys29.

It belongs to the DNA gyrase inhibitor YacG family. Interacts with GyrB. The cofactor is Zn(2+).

Its function is as follows. Inhibits all the catalytic activities of DNA gyrase by preventing its interaction with DNA. Acts by binding directly to the C-terminal domain of GyrB, which probably disrupts DNA binding by the gyrase. This Haemophilus influenzae (strain ATCC 51907 / DSM 11121 / KW20 / Rd) protein is DNA gyrase inhibitor YacG.